The sequence spans 629 residues: Hemocyanin G chain (629 aa).

Cu cation contacts are provided by His171, His175, His202, His322, His326, and His362. N-linked (GlcNAc...) asparagine glycans are attached at residues Asn447 and Asn506. Cysteines 534 and 582 form a disulfide. Asn615 is a glycosylation site (N-linked (GlcNAc...) asparagine).

The protein belongs to the tyrosinase family. Hemocyanin subfamily. As to quaternary structure, tarantula hemocyanin is a 24-chain polymer with seven different chains identified. Hemolymph.

It is found in the secreted. Its subcellular location is the extracellular space. Functionally, hemocyanins are copper-containing oxygen carriers occurring freely dissolved in the hemolymph of many mollusks and arthropods. The protein is Hemocyanin G chain (HCG) of Aphonopelma sp. (American tarantula).